The chain runs to 264 residues: uncharacterized protein (264 aa).

Helical transmembrane passes span 48-68 (LTIT…LLVF), 112-132 (ITPS…FLLA), and 142-162 (LPIA…SYLI). S260 bears the Phosphoserine mark.

The protein localises to the membrane. This is an uncharacterized protein from Schizosaccharomyces pombe (strain 972 / ATCC 24843) (Fission yeast).